The chain runs to 227 residues: Cytochrome c oxidase subunit 2 (227 aa).

Over 1–14 the chain is Mitochondrial intermembrane; sequence MAYPMQLGFQDATS. The chain crosses the membrane as a helical span at residues 15–45; the sequence is PIMEELLHFHDHTLMIVFLISSLVLYIISLM. The Mitochondrial matrix portion of the chain corresponds to 46–59; the sequence is LTTKLTHTSTMDAQ. The chain crosses the membrane as a helical span at residues 60–87; sequence EVETVWTILPAIILILIALPSLRILYMM. At 88–227 the chain is on the mitochondrial intermembrane side; sequence DEINNPSLTV…HFEEWSASMS (140 aa). Residues histidine 161, cysteine 196, glutamate 198, cysteine 200, histidine 204, and methionine 207 each contribute to the Cu cation site. Glutamate 198 contributes to the Mg(2+) binding site.

Belongs to the cytochrome c oxidase subunit 2 family. As to quaternary structure, component of the cytochrome c oxidase (complex IV, CIV), a multisubunit enzyme composed of 14 subunits. The complex is composed of a catalytic core of 3 subunits MT-CO1, MT-CO2 and MT-CO3, encoded in the mitochondrial DNA, and 11 supernumerary subunits COX4I, COX5A, COX5B, COX6A, COX6B, COX6C, COX7A, COX7B, COX7C, COX8 and NDUFA4, which are encoded in the nuclear genome. The complex exists as a monomer or a dimer and forms supercomplexes (SCs) in the inner mitochondrial membrane with NADH-ubiquinone oxidoreductase (complex I, CI) and ubiquinol-cytochrome c oxidoreductase (cytochrome b-c1 complex, complex III, CIII), resulting in different assemblies (supercomplex SCI(1)III(2)IV(1) and megacomplex MCI(2)III(2)IV(2)). Found in a complex with TMEM177, COA6, COX18, COX20, SCO1 and SCO2. Interacts with TMEM177 in a COX20-dependent manner. Interacts with COX20. Interacts with COX16. It depends on Cu cation as a cofactor.

The protein resides in the mitochondrion inner membrane. It carries out the reaction 4 Fe(II)-[cytochrome c] + O2 + 8 H(+)(in) = 4 Fe(III)-[cytochrome c] + 2 H2O + 4 H(+)(out). Its function is as follows. Component of the cytochrome c oxidase, the last enzyme in the mitochondrial electron transport chain which drives oxidative phosphorylation. The respiratory chain contains 3 multisubunit complexes succinate dehydrogenase (complex II, CII), ubiquinol-cytochrome c oxidoreductase (cytochrome b-c1 complex, complex III, CIII) and cytochrome c oxidase (complex IV, CIV), that cooperate to transfer electrons derived from NADH and succinate to molecular oxygen, creating an electrochemical gradient over the inner membrane that drives transmembrane transport and the ATP synthase. Cytochrome c oxidase is the component of the respiratory chain that catalyzes the reduction of oxygen to water. Electrons originating from reduced cytochrome c in the intermembrane space (IMS) are transferred via the dinuclear copper A center (CU(A)) of subunit 2 and heme A of subunit 1 to the active site in subunit 1, a binuclear center (BNC) formed by heme A3 and copper B (CU(B)). The BNC reduces molecular oxygen to 2 water molecules using 4 electrons from cytochrome c in the IMS and 4 protons from the mitochondrial matrix. The polypeptide is Cytochrome c oxidase subunit 2 (MT-CO2) (Antilocapra americana (Pronghorn)).